The sequence spans 422 residues: Ribosomal RNA small subunit methyltransferase B (422 aa).

S-adenosyl-L-methionine-binding positions include 254-260 (CAAPGGK), Asp-277, Asp-303, and Asp-322. Cys-375 serves as the catalytic Nucleophile.

Belongs to the class I-like SAM-binding methyltransferase superfamily. RsmB/NOP family.

The protein resides in the cytoplasm. The enzyme catalyses cytidine(967) in 16S rRNA + S-adenosyl-L-methionine = 5-methylcytidine(967) in 16S rRNA + S-adenosyl-L-homocysteine + H(+). In terms of biological role, specifically methylates the cytosine at position 967 (m5C967) of 16S rRNA. This Proteus mirabilis (strain HI4320) protein is Ribosomal RNA small subunit methyltransferase B.